A 346-amino-acid polypeptide reads, in one-letter code: Parapinopsin (346 aa).

The Extracellular segment spans residues 1 to 29 (MASIILINFSETDTLHLGSVNDHIMPRIG). Asn8 carries N-linked (GlcNAc...) asparagine glycosylation. Residues 30–54 (YTILSIIMALSSTFGIILNMVVIIV) form a helical membrane-spanning segment. At 55 to 66 (TVRYKQLRQPLN) the chain is on the cytoplasmic side. The chain crosses the membrane as a helical span at residues 67 to 91 (YALVNLAVADLGCPVFGGLLTAVTN). Residues 92–106 (AMGYFSLGRVGCVLE) lie on the Extracellular side of the membrane. The cysteines at positions 103 and 180 are disulfide-linked. Residues 107–126 (GFAVAFFGIAGLCSVAVIAV) traverse the membrane as a helical segment. Over 127–145 (DRYMVVCRPLGAVMFQTKH) the chain is Cytoplasmic. The chain crosses the membrane as a helical span at residues 146–169 (ALAGVVFSWVWSFIWNTPPLFGWG). Over 170 to 193 (SYQLEGVMTSCAPNWYRRDPVNVS) the chain is Extracellular. N-linked (GlcNAc...) asparagine glycosylation occurs at Asn191. Residues 194 to 221 (YILCYFMLCFALPFATIIFSYMHLLHTL) form a helical membrane-spanning segment. Residues 222-244 (WQVAKLQVADSGSTAKVEVQVAR) are Cytoplasmic-facing. Residues 245–268 (MVVIMVMAFLLTWLPYAAFALTVI) traverse the membrane as a helical segment. Topologically, residues 269 to 276 (IDSNIYIN) are extracellular. Residues 277–301 (PVIGTIPAYLAKSSTVFNPIIYIFM) traverse the membrane as a helical segment. Lys288 bears the N6-(retinylidene)lysine mark. At 302-346 (NRQFRDYALPCLLCGKNPWAAKEGRDSDTNTLTTTVSKNTSVSPL) the chain is on the cytoplasmic side. Cys315 carries the S-palmitoyl cysteine lipid modification. The disordered stretch occupies residues 325 to 346 (GRDSDTNTLTTTVSKNTSVSPL). Residues 330 to 346 (TNTLTTTVSKNTSVSPL) show a composition bias toward low complexity.

This sequence belongs to the G-protein coupled receptor 1 family. Opsin subfamily. Phosphorylated on some or all of the serine and threonine residues present in the C-terminal region. As to expression, parapineal organ.

It localises to the membrane. The protein is Parapinopsin of Ictalurus punctatus (Channel catfish).